Here is a 596-residue protein sequence, read N- to C-terminus: Nucleotidyltransferase lcsQ (596 aa).

A mitochondrion-targeting transit peptide spans 1 to 22 (MLLRLSPSRMALKRKLDSFLRN). Residues 475–504 (IVAHPGKPSQPADVPETPLSSGASKSKNLD) are disordered.

Belongs to the tRNA nucleotidyltransferase/poly(A) polymerase family.

The protein localises to the mitochondrion. Functionally, nucleotidyltransferase; part of the gene cluster that mediates the biosynthesis of the lipopeptide antibiotics leucinostatins that show extensive biological activities, including antimalarial, antiviral, antibacterial, antifungal, and antitumor activities, as well as phytotoxic. The function of lcsQ within the leucinostatins biosynthesis has not been identified yet. In Purpureocillium lilacinum (Paecilomyces lilacinus), this protein is Nucleotidyltransferase lcsQ.